A 320-amino-acid polypeptide reads, in one-letter code: Malate dehydrogenase (320 aa).

Residues 10 to 15 (GSGMIG) and D34 contribute to the NAD(+) site. Substrate contacts are provided by R83 and R89. NAD(+)-binding positions include N96 and 119-121 (ITN). The substrate site is built by N121 and R152. The Proton acceptor role is filled by H176.

This sequence belongs to the LDH/MDH superfamily. MDH type 3 family.

The catalysed reaction is (S)-malate + NAD(+) = oxaloacetate + NADH + H(+). In terms of biological role, catalyzes the reversible oxidation of malate to oxaloacetate. This is Malate dehydrogenase from Hyphomonas neptunium (strain ATCC 15444).